We begin with the raw amino-acid sequence, 426 residues long: 3-phosphoshikimate 1-carboxyvinyltransferase (426 aa).

3-phosphoshikimate-binding residues include K23, S24, and R28. K23 lines the phosphoenolpyruvate pocket. Positions 96 and 124 each coordinate phosphoenolpyruvate. 3-phosphoshikimate-binding residues include T170, S171, Q172, S198, D314, and K341. A phosphoenolpyruvate-binding site is contributed by Q172. The active-site Proton acceptor is the D314. Residues R345, R386, and K411 each contribute to the phosphoenolpyruvate site.

This sequence belongs to the EPSP synthase family. Monomer.

It localises to the cytoplasm. The enzyme catalyses 3-phosphoshikimate + phosphoenolpyruvate = 5-O-(1-carboxyvinyl)-3-phosphoshikimate + phosphate. It functions in the pathway metabolic intermediate biosynthesis; chorismate biosynthesis; chorismate from D-erythrose 4-phosphate and phosphoenolpyruvate: step 6/7. Functionally, catalyzes the transfer of the enolpyruvyl moiety of phosphoenolpyruvate (PEP) to the 5-hydroxyl of shikimate-3-phosphate (S3P) to produce enolpyruvyl shikimate-3-phosphate and inorganic phosphate. The polypeptide is 3-phosphoshikimate 1-carboxyvinyltransferase (Trichormus variabilis (strain ATCC 29413 / PCC 7937) (Anabaena variabilis)).